A 160-amino-acid polypeptide reads, in one-letter code: Major strawberry allergen Fra a 1-B (160 aa).

The protein belongs to the BetVI family. As to quaternary structure, monomer.

This is Major strawberry allergen Fra a 1-B from Fragaria ananassa (Strawberry).